We begin with the raw amino-acid sequence, 57 residues long: MDVPLELSAYTRVLRLASTPSWEEFSQIAKIAGAGILLIGAIGFLVFLIMGGIVSVI.

The helical transmembrane segment at 34 to 54 (AGILLIGAIGFLVFLIMGGIV) threads the bilayer.

This sequence belongs to the SecE/SEC61-gamma family. Component of the Sec protein translocase complex. Heterotrimer consisting of SecY (alpha), SecG (beta) and SecE (gamma) subunits. The heterotrimers can form oligomers, although 1 heterotrimer is thought to be able to translocate proteins. Interacts with the ribosome. May interact with SecDF, and other proteins may be involved.

It localises to the cell membrane. In terms of biological role, essential subunit of the Sec protein translocation channel SecYEG. Clamps together the 2 halves of SecY. May contact the channel plug during translocation. The protein is Protein translocase subunit SecE of Halobacterium salinarum (strain ATCC 29341 / DSM 671 / R1).